The chain runs to 23 residues: Defensin-like protein 2 (23 aa).

Gln-1 is modified (pyrrolidone carboxylic acid).

The protein belongs to the DEFL family. In terms of assembly, forms oligomers in its native state.

Possesses antifungal activity sensitive to inorganic cations. The polypeptide is Defensin-like protein 2 (Brassica napus (Rape)).